The chain runs to 261 residues: Vacuolar protein sorting-associated protein 37D (261 aa).

In terms of domain architecture, VPS37 C-terminal spans 93-182; the sequence is AENCADKLQR…RRRERSAQPA (90 aa). Residues 172–261 form a disordered region; it reads LRRRERSAQP…RPSQPEPPHR (90 aa). Low complexity predominate over residues 181-195; sequence PAPTTAAAAAAAATA. Pro residues-rich tracts occupy residues 215–224 and 231–261; these read GPPPAVPRSL and PVPPVKGSPGCPFGPAPLLSPRPSQPEPPHR.

It belongs to the VPS37 family. Component of the ESCRT-I complex (endosomal sorting complex required for transport I) which consists of TSG101, VPS28, a VPS37 protein (VPS37A to -D) and MVB12A or MVB12B in a 1:1:1:1 stoichiometry. Interacts with TSG101 and MVB12A. Component of the ESCRT-I complex (endosomal sorting complex required for transport I) which consists of TSG101, VPS28, a VPS37 protein (VPS37A to -D) and UBAP1 in a 1:1:1:1 stoichiometry.

It is found in the late endosome membrane. Functionally, component of the ESCRT-I complex, a regulator of vesicular trafficking process. Required for the sorting of endocytic ubiquitinated cargos into multivesicular bodies. May be involved in cell growth and differentiation. The protein is Vacuolar protein sorting-associated protein 37D of Mus musculus (Mouse).